Reading from the N-terminus, the 263-residue chain is 4-hydroxy-tetrahydrodipicolinate reductase (263 aa).

NAD(+) contacts are provided by residues 7–12 (GFKGRM), 96–98 (GTT), and 122–125 (APNF). Residue His152 is the Proton donor/acceptor of the active site. His153 serves as a coordination point for (S)-2,3,4,5-tetrahydrodipicolinate. Lys156 acts as the Proton donor in catalysis. 162–163 (GT) is a binding site for (S)-2,3,4,5-tetrahydrodipicolinate.

This sequence belongs to the DapB family.

It localises to the cytoplasm. The catalysed reaction is (S)-2,3,4,5-tetrahydrodipicolinate + NAD(+) + H2O = (2S,4S)-4-hydroxy-2,3,4,5-tetrahydrodipicolinate + NADH + H(+). It carries out the reaction (S)-2,3,4,5-tetrahydrodipicolinate + NADP(+) + H2O = (2S,4S)-4-hydroxy-2,3,4,5-tetrahydrodipicolinate + NADPH + H(+). Its pathway is amino-acid biosynthesis; L-lysine biosynthesis via DAP pathway; (S)-tetrahydrodipicolinate from L-aspartate: step 4/4. In terms of biological role, catalyzes the conversion of 4-hydroxy-tetrahydrodipicolinate (HTPA) to tetrahydrodipicolinate. The protein is 4-hydroxy-tetrahydrodipicolinate reductase of Listeria innocua serovar 6a (strain ATCC BAA-680 / CLIP 11262).